The following is a 359-amino-acid chain: DNA polymerase IV (359 aa).

One can recognise a UmuC domain in the interval 4–185 (IIHIDMDCYF…LPLSKIPGVG (182 aa)). Residues Asp-8 and Asp-103 each coordinate Mg(2+). Residue Glu-104 is part of the active site.

Belongs to the DNA polymerase type-Y family. Monomer. Requires Mg(2+) as cofactor.

The protein resides in the cytoplasm. It catalyses the reaction DNA(n) + a 2'-deoxyribonucleoside 5'-triphosphate = DNA(n+1) + diphosphate. Functionally, poorly processive, error-prone DNA polymerase involved in untargeted mutagenesis. Copies undamaged DNA at stalled replication forks, which arise in vivo from mismatched or misaligned primer ends. These misaligned primers can be extended by PolIV. Exhibits no 3'-5' exonuclease (proofreading) activity. May be involved in translesional synthesis, in conjunction with the beta clamp from PolIII. The chain is DNA polymerase IV from Shewanella frigidimarina (strain NCIMB 400).